The primary structure comprises 187 residues: Ribosome-recycling factor (187 aa).

The protein belongs to the RRF family.

The protein localises to the cytoplasm. Its function is as follows. Responsible for the release of ribosomes from messenger RNA at the termination of protein biosynthesis. May increase the efficiency of translation by recycling ribosomes from one round of translation to another. This chain is Ribosome-recycling factor, found in Flavobacterium psychrophilum (strain ATCC 49511 / DSM 21280 / CIP 103535 / JIP02/86).